A 239-amino-acid polypeptide reads, in one-letter code: Lactate utilization protein A (239 aa).

The protein belongs to the LutA/YkgE family.

Its function is as follows. Is involved in L-lactate degradation and allows cells to grow with lactate as the sole carbon source. The sequence is that of Lactate utilization protein A from Geobacillus thermodenitrificans (strain NG80-2).